A 272-amino-acid polypeptide reads, in one-letter code: Regulatory protein RecX (272 aa).

The protein belongs to the RecX family.

The protein localises to the cytoplasm. Modulates RecA activity. The polypeptide is Regulatory protein RecX (Staphylococcus saprophyticus subsp. saprophyticus (strain ATCC 15305 / DSM 20229 / NCIMB 8711 / NCTC 7292 / S-41)).